Here is a 247-residue protein sequence, read N- to C-terminus: ATP synthase subunit a, chloroplastic (247 aa).

5 helical membrane-spanning segments follow: residues 38 to 58 (QVLI…TLAV), 95 to 115 (VPFI…GALL), 134 to 154 (INTT…AGLT), 199 to 219 (LVVV…VMFL), and 220 to 240 (GLFT…AYIG).

The protein belongs to the ATPase A chain family. In terms of assembly, F-type ATPases have 2 components, CF(1) - the catalytic core - and CF(0) - the membrane proton channel. CF(1) has five subunits: alpha(3), beta(3), gamma(1), delta(1), epsilon(1). CF(0) has four main subunits: a, b, b' and c.

It is found in the plastid. Its subcellular location is the chloroplast thylakoid membrane. Functionally, key component of the proton channel; it plays a direct role in the translocation of protons across the membrane. The polypeptide is ATP synthase subunit a, chloroplastic (Guizotia abyssinica (Niger)).